Consider the following 44-residue polypeptide: Antibacterial protein 2 homolog (44 aa).

This sequence belongs to the staphylococcal hemolytic protein family.

It is found in the secreted. Functionally, has hemolytic activity and also inhibits the growth of gonococci. This is Antibacterial protein 2 homolog from Staphylococcus haemolyticus (strain JCSC1435).